The primary structure comprises 361 residues: Molybdopterin synthase catalytic subunit (361 aa).

Substrate contacts are provided by residues 101–102 (HR), Lys117, and 124–126 (KKE).

The protein belongs to the MoaE family. MOCS2B subfamily. Heterotetramer; composed of 2 small (Mocs2A) and 2 large (Mocs2B) subunits.

Its subcellular location is the cytoplasm. The enzyme catalyses 2 [molybdopterin-synthase sulfur-carrier protein]-C-terminal-Gly-aminoethanethioate + cyclic pyranopterin phosphate + H2O = molybdopterin + 2 [molybdopterin-synthase sulfur-carrier protein]-C-terminal Gly-Gly + 2 H(+). It participates in cofactor biosynthesis; molybdopterin biosynthesis. Functionally, catalytic subunit of the molybdopterin synthase complex, a complex that catalyzes the conversion of precursor Z into molybdopterin. Acts by mediating the incorporation of 2 sulfur atoms from thiocarboxylated Mocs2A into precursor Z to generate a dithiolene group. The polypeptide is Molybdopterin synthase catalytic subunit (Drosophila pseudoobscura pseudoobscura (Fruit fly)).